A 170-amino-acid polypeptide reads, in one-letter code: uncharacterized protein (170 aa).

The next 3 helical transmembrane spans lie at 6–26 (PFYFYIGMALILASIVSILLI), 31–51 (LLFILLAFGSLVGITLILIYI), and 91–111 (IYFSGTFYNSAVLFFIFIVAF).

This sequence to M.jannaschii MJ1249.1, MJ0210.1 and MJ0785.1.

Its subcellular location is the cell membrane. This is an uncharacterized protein from Methanocaldococcus jannaschii (strain ATCC 43067 / DSM 2661 / JAL-1 / JCM 10045 / NBRC 100440) (Methanococcus jannaschii).